The chain runs to 395 residues: RNA demethylase ALKBH5 (395 aa).

Disordered regions lie at residues 1–28 (MAAA…AGSR) and 47–83 (AAEP…EEEA). At alanine 2 the chain carries N-acetylalanine. Residue lysine 58 forms a Glycyl lysine isopeptide (Lys-Gly) (interchain with G-Cter in ubiquitin) linkage. Residues 60–83 (KYQEDSDPERSDYEEHQLQKEEEA) are compositionally biased toward basic and acidic residues. Phosphoserine is present on residues serine 65 and serine 70. A coiled-coil region spans residues 68–117 (ERSDYEEHQLQKEEEARKVKSGIRQIRLFSQDECSKIEARIDEVVSRAEK). Tyrosine 72 is modified (phosphotyrosine). Lysine 87 is covalently cross-linked (Glycyl lysine isopeptide (Lys-Gly) (interchain with G-Cter in SUMO1)). A Phosphoserine modification is found at serine 88. N6-acetyllysine is present on lysine 133. The active site involves tyrosine 140. 2-oxoglutarate contacts are provided by asparagine 194, tyrosine 196, and histidine 205. Cysteine 231 and cysteine 268 are oxidised to a cystine. Lysine 236 carries the N6-acetyllysine modification. Residues histidine 267 and arginine 278 each contribute to the 2-oxoglutarate site. The tract at residues 294-395 (ETKSLSSSTL…PTRKVKMRRH (102 aa)) is disordered. Positions 296-306 (KSLSSSTLPPS) are enriched in low complexity. Lysine 322 is covalently cross-linked (Glycyl lysine isopeptide (Lys-Gly) (interchain with G-Cter in SUMO1)). Serine 326 bears the Phosphoserine mark. Residue lysine 329 forms a Glycyl lysine isopeptide (Lys-Gly) (interchain with G-Cter in SUMO2) linkage. The span at 329 to 350 (KADPDAAHRPRILEMDKEENRR) shows a compositional bias: basic and acidic residues. Arginine 360 is modified (omega-N-methylarginine). Serine 362, serine 372, serine 375, and serine 385 each carry phosphoserine.

It belongs to the alkB family. As to quaternary structure, monomer. Interacts with RBM33; promoting desumoylation by SENP1 and recruitment to N(6)-methyladenosine-containing mRNAs. Interacts (when acetylated by KAT8) with PSPC1; interaction facilitates recognition of N(6)-methyladenosine (m6A) mRNA. Fe(2+) serves as cofactor. In terms of processing, phosphorylated at Ser-88 and Ser-326 in response to reactive oxygen species (ROS), promoting sumoylation and inactivation. Acetylated by KAT8 at Lys-236, promoting interaction with PSPC1, thereby facilitating recognition of N(6)-methyladenosine (m6A) mRNA by ALKBH5. Deacetylated at Lys-236 by HDAC7. Post-translationally, sumoylated at Lys-87 and Lys-322 by PIAS4 following phosphorylation at Ser-88 and Ser-326 in response to reactive oxygen species (ROS), inhibiting the RNA demethylase activity. Desumoylated by SENP1; relieving RNA demethylase inhibition, leading to N(6)-methyladenosine-containing mRNAs demethylation. In terms of processing, ubiquitinated at Lys-58 via 'Lys-48'-linked polyubiquitin chain, leading to its degradation by the proteasome. Deubiquitinated at Lys-58 by USP9X, promoting its stabilizazion. In terms of tissue distribution, widely expressed, with highest expression in testis. In testis, present in almost all testicular cell types except elongating and elongated spermatids (at protein level). Among spermatogenic cells, present at high level in spermatocytes; medium levels in spermatogonia and lower levels in round spermatids (at protein level).

It localises to the nucleus speckle. The catalysed reaction is an N(6)-methyladenosine in mRNA + 2-oxoglutarate + O2 = an adenosine in mRNA + formaldehyde + succinate + CO2. With respect to regulation, RNA demethylase activity is inhibited following sumoylation. Inhibition is relieved following desumoylation. Inhibited by histone demethylase inhibitor IOX1. Dioxygenase that specifically demethylates N(6)-methyladenosine (m6A) RNA, the most prevalent internal modification of messenger RNA (mRNA) in higher eukaryotes. Demethylates RNA by oxidative demethylation, which requires molecular oxygen, alpha-ketoglutarate and iron. Demethylation of m6A mRNA affects mRNA processing, translation and export. Can also demethylate N(6)-methyladenosine in single-stranded DNA (in vitro). Required for the late meiotic and haploid phases of spermatogenesis by mediating m6A demethylation in spermatocytes and round spermatids: m6A demethylation of target transcripts is required for correct splicing and the production of longer 3'-UTR mRNAs in male germ cells. Involved in paraspeckle assembly, a nuclear membraneless organelle, by undergoing liquid-liquid phase separation. Paraspeckle assembly is coupled with m6A demethylation of RNAs, such as NEAT1 non-coding RNA. Also acts as a negative regulator of T-cell development: inhibits gamma-delta T-cell proliferation via demethylation of JAG1 and NOTCH2 transcripts. Inhibits regulatory T-cell (Treg) recruitment by mediating demethylation and destabilization of CCL28 mRNAs. This Mus musculus (Mouse) protein is RNA demethylase ALKBH5.